The primary structure comprises 277 residues: Release factor glutamine methyltransferase (277 aa).

S-adenosyl-L-methionine contacts are provided by residues 119–123 (GTGTG), Asp-142, and Asn-184. 184 to 187 (NPPY) is a binding site for substrate.

This sequence belongs to the protein N5-glutamine methyltransferase family. PrmC subfamily.

It carries out the reaction L-glutaminyl-[peptide chain release factor] + S-adenosyl-L-methionine = N(5)-methyl-L-glutaminyl-[peptide chain release factor] + S-adenosyl-L-homocysteine + H(+). Functionally, methylates the class 1 translation termination release factors RF1/PrfA and RF2/PrfB on the glutamine residue of the universally conserved GGQ motif. In Enterococcus faecalis (strain ATCC 700802 / V583), this protein is Release factor glutamine methyltransferase.